The sequence spans 414 residues: Histidine--tRNA ligase (414 aa).

Belongs to the class-II aminoacyl-tRNA synthetase family. As to quaternary structure, homodimer.

The protein localises to the cytoplasm. It catalyses the reaction tRNA(His) + L-histidine + ATP = L-histidyl-tRNA(His) + AMP + diphosphate + H(+). This is Histidine--tRNA ligase from Solibacter usitatus (strain Ellin6076).